A 418-amino-acid chain; its full sequence is Putative L-glutamine:3-amino-2,3-dideoxy-scyllo-inosose aminotransferase (418 aa).

Lys-199 carries the post-translational modification N6-(pyridoxal phosphate)lysine.

This sequence belongs to the DegT/DnrJ/EryC1 family. L-glutamine:2-deoxy-scyllo-inosose/scyllo-inosose aminotransferase subfamily. Pyridoxal 5'-phosphate serves as cofactor.

It catalyses the reaction 3-amino-2,3-dideoxy-scyllo-inosose + L-glutamine = 2-deoxystreptamine + 2-oxoglutaramate. It functions in the pathway metabolic intermediate biosynthesis; 2-deoxystreptamine biosynthesis; 2-deoxystreptamine from D-glucose 6-phosphate: step 4/4. It participates in antibiotic biosynthesis; gentamicin biosynthesis. In terms of biological role, catalyzes the transamination of 3-amino-2,3-dideoxy-scyllo-inosose (amino-DOI) into 2-deoxystreptamine (DOS). The sequence is that of Putative L-glutamine:3-amino-2,3-dideoxy-scyllo-inosose aminotransferase (gtmD) from Micromonospora echinospora (Micromonospora purpurea).